The primary structure comprises 233 residues: Orotidine 5'-phosphate decarboxylase (233 aa).

Substrate-binding positions include Asp13, Lys35, 62–71, Thr122, Arg182, Gln191, Gly211, and Arg212; that span reads DLKFHDIPNT. The Proton donor role is filled by Lys64.

It belongs to the OMP decarboxylase family. Type 1 subfamily. Homodimer.

The catalysed reaction is orotidine 5'-phosphate + H(+) = UMP + CO2. The protein operates within pyrimidine metabolism; UMP biosynthesis via de novo pathway; UMP from orotate: step 2/2. In terms of biological role, catalyzes the decarboxylation of orotidine 5'-monophosphate (OMP) to uridine 5'-monophosphate (UMP). The sequence is that of Orotidine 5'-phosphate decarboxylase from Pseudomonas putida (strain ATCC 47054 / DSM 6125 / CFBP 8728 / NCIMB 11950 / KT2440).